The chain runs to 212 residues: ECF RNA polymerase sigma factor SigD (212 aa).

The tract at residues 49–119 is sigma-70 factor domain-2; it reads ETIRPIVVRY…VADAHRAAGR (71 aa). Positions 75-78 match the Polymerase core binding motif; that stretch reads DVAQ. The interval 152 to 201 is sigma-70 factor domain-4; sequence NELLEILPAKQREILILRVVVGLSAEETAAAVGSTTGAVRVAQHRALQRL. Residues 176–195 constitute a DNA-binding region (H-T-H motif); that stretch reads AEETAAAVGSTTGAVRVAQH.

It belongs to the sigma-70 factor family. ECF subfamily. In terms of assembly, interacts transiently with the RNA polymerase catalytic core formed by RpoA, RpoB, RpoC and RpoZ (2 alpha, 1 beta, 1 beta' and 1 omega subunit) to form the RNA polymerase holoenzyme that can initiate transcription. Interacts (via sigma-70 factor domain 4) with RsdA.

In terms of biological role, sigma factors are initiation factors that promote the attachment of RNA polymerase to specific initiation sites and are then released. Extracytoplasmic function (ECF) sigma factors are held in an inactive form by an anti-sigma factor until released by regulated intramembrane proteolysis. The sequence is that of ECF RNA polymerase sigma factor SigD (sigD) from Mycobacterium bovis (strain ATCC BAA-935 / AF2122/97).